The chain runs to 373 residues: DNA replication and repair protein RecF (373 aa).

30 to 37 serves as a coordination point for ATP; sequence GPNGQGKT.

It belongs to the RecF family.

The protein localises to the cytoplasm. Its function is as follows. The RecF protein is involved in DNA metabolism; it is required for DNA replication and normal SOS inducibility. RecF binds preferentially to single-stranded, linear DNA. It also seems to bind ATP. In Streptomyces avermitilis (strain ATCC 31267 / DSM 46492 / JCM 5070 / NBRC 14893 / NCIMB 12804 / NRRL 8165 / MA-4680), this protein is DNA replication and repair protein RecF.